The sequence spans 189 residues: UPF0301 protein PA14_05290 (189 aa).

Belongs to the UPF0301 (AlgH) family.

The polypeptide is UPF0301 protein PA14_05290 (Pseudomonas aeruginosa (strain UCBPP-PA14)).